The chain runs to 638 residues: Polypeptide N-acetylgalactosaminyltransferase 15 (638 aa).

Residues 1–12 (MLPRKRPRSGRS) are Cytoplasmic-facing. Residues 13-35 (RLQFLLLFLTLGCVLMMVILLHP) form a helical; Signal-anchor for type II membrane protein membrane-spanning segment. The Lumenal segment spans residues 36–638 (PPPTLHQAVT…FDQIHPVDER (603 aa)). Residues 134-157 (KDWRTEEDGEESEEVLTPLGPDSD) are disordered. Cystine bridges form between Cys181-Cys411, Cys402-Cys481, Cys516-Cys535, Cys561-Cys574, and Cys602-Cys619. Positions 190 to 299 (LPTASVILCF…PGWLEPLLSR (110 aa)) are catalytic subdomain A. The substrate site is built by Asp231 and Arg260. Asp283, His285, and His416 together coordinate Mn(2+). The segment at 357-419 (PVRSPVVPRE…PCSRVGHIYR (63 aa)) is catalytic subdomain B. Position 419 (Arg419) interacts with substrate. The region spanning 503-630 (RFSGKLHNTG…GKTSQLWRFD (128 aa)) is the Ricin B-type lectin domain. An N-linked (GlcNAc...) asparagine glycan is attached at Asn573.

This sequence belongs to the glycosyltransferase 2 family. GalNAc-T subfamily. Mn(2+) serves as cofactor. As to expression, specifically expressed in testis.

It is found in the golgi apparatus membrane. The catalysed reaction is L-seryl-[protein] + UDP-N-acetyl-alpha-D-galactosamine = a 3-O-[N-acetyl-alpha-D-galactosaminyl]-L-seryl-[protein] + UDP + H(+). It catalyses the reaction L-threonyl-[protein] + UDP-N-acetyl-alpha-D-galactosamine = a 3-O-[N-acetyl-alpha-D-galactosaminyl]-L-threonyl-[protein] + UDP + H(+). It participates in protein modification; protein glycosylation. Catalyzes the initial reaction in O-linked oligosaccharide biosynthesis, the transfer of an N-acetyl-D-galactosamine residue to a serine or threonine residue on the protein receptor. Although it displays a much weaker activity toward all substrates tested compared to GALNT2, it is able to transfer up to seven GalNAc residues to the Muc5AC peptide, suggesting that it can fill vicinal Thr/Ser residues in cooperation with other GALNT proteins. Prefers Muc1a as substrate. This chain is Polypeptide N-acetylgalactosaminyltransferase 15 (Galnt15), found in Mus musculus (Mouse).